A 179-amino-acid polypeptide reads, in one-letter code: Low molecular weight phosphotyrosine protein phosphatase (179 aa).

Cys-15 serves as the catalytic Nucleophile. Residue Arg-21 is part of the active site. The active-site Proton donor is Asp-148.

Belongs to the low molecular weight phosphotyrosine protein phosphatase family.

The protein resides in the cytoplasm. The catalysed reaction is O-phospho-L-tyrosyl-[protein] + H2O = L-tyrosyl-[protein] + phosphate. The enzyme catalyses a phosphate monoester + H2O = an alcohol + phosphate. Acts on tyrosine phosphorylated proteins, low-MW aryl phosphates and natural and synthetic acyl phosphates. This Dictyostelium discoideum (Social amoeba) protein is Low molecular weight phosphotyrosine protein phosphatase (acp1).